We begin with the raw amino-acid sequence, 410 residues long: Argininosuccinate synthase (410 aa).

Residues 10 to 18 (AYSGGLDTS) and alanine 37 contribute to the ATP site. Positions 90 and 95 each coordinate L-citrulline. Glycine 120 provides a ligand contact to ATP. Residues threonine 122, asparagine 126, and aspartate 127 each coordinate L-aspartate. Asparagine 126 is an L-citrulline binding site. Residues arginine 130, serine 182, serine 191, glutamate 267, and tyrosine 279 each coordinate L-citrulline.

The protein belongs to the argininosuccinate synthase family. Type 1 subfamily. Homotetramer.

It is found in the cytoplasm. It catalyses the reaction L-citrulline + L-aspartate + ATP = 2-(N(omega)-L-arginino)succinate + AMP + diphosphate + H(+). Its pathway is amino-acid biosynthesis; L-arginine biosynthesis; L-arginine from L-ornithine and carbamoyl phosphate: step 2/3. This chain is Argininosuccinate synthase, found in Polynucleobacter asymbioticus (strain DSM 18221 / CIP 109841 / QLW-P1DMWA-1) (Polynucleobacter necessarius subsp. asymbioticus).